Here is a 64-residue protein sequence, read N- to C-terminus: Large ribosomal subunit protein uL30 (64 aa).

It belongs to the universal ribosomal protein uL30 family. Part of the 50S ribosomal subunit.

This chain is Large ribosomal subunit protein uL30, found in Rhodopseudomonas palustris (strain BisB18).